The chain runs to 331 residues: Adenosine deaminase (331 aa).

Zn(2+) is bound by residues histidine 12 and histidine 14. Residues histidine 14, aspartate 16, and glycine 170 each contribute to the substrate site. Zn(2+) is bound at residue histidine 197. The active-site Proton donor is the glutamate 200. Aspartate 278 is a Zn(2+) binding site. Aspartate 279 provides a ligand contact to substrate.

It belongs to the metallo-dependent hydrolases superfamily. Adenosine and AMP deaminases family. Adenosine deaminase subfamily. Zn(2+) is required as a cofactor.

The enzyme catalyses adenosine + H2O + H(+) = inosine + NH4(+). It catalyses the reaction 2'-deoxyadenosine + H2O + H(+) = 2'-deoxyinosine + NH4(+). In terms of biological role, catalyzes the hydrolytic deamination of adenosine and 2-deoxyadenosine. This is Adenosine deaminase from Shewanella sp. (strain MR-7).